Consider the following 252-residue polypeptide: Hydroxyacylglutathione hydrolase (252 aa).

Positions 54, 56, 58, 59, 113, 132, and 170 each coordinate Zn(2+).

The protein belongs to the metallo-beta-lactamase superfamily. Glyoxalase II family. Monomer. It depends on Zn(2+) as a cofactor.

The enzyme catalyses an S-(2-hydroxyacyl)glutathione + H2O = a 2-hydroxy carboxylate + glutathione + H(+). The protein operates within secondary metabolite metabolism; methylglyoxal degradation; (R)-lactate from methylglyoxal: step 2/2. Functionally, thiolesterase that catalyzes the hydrolysis of S-D-lactoyl-glutathione to form glutathione and D-lactic acid. This chain is Hydroxyacylglutathione hydrolase, found in Gloeobacter violaceus (strain ATCC 29082 / PCC 7421).